A 375-amino-acid polypeptide reads, in one-letter code: Aminomethyltransferase (375 aa).

Belongs to the GcvT family. In terms of assembly, the glycine cleavage system is composed of four proteins: P, T, L and H.

The enzyme catalyses N(6)-[(R)-S(8)-aminomethyldihydrolipoyl]-L-lysyl-[protein] + (6S)-5,6,7,8-tetrahydrofolate = N(6)-[(R)-dihydrolipoyl]-L-lysyl-[protein] + (6R)-5,10-methylene-5,6,7,8-tetrahydrofolate + NH4(+). Its function is as follows. The glycine cleavage system catalyzes the degradation of glycine. This Ralstonia pickettii (strain 12J) protein is Aminomethyltransferase.